A 359-amino-acid chain; its full sequence is Cyclic AMP response element-binding protein B (359 aa).

2 disordered regions span residues 1 to 73 (MDNS…AQGG) and 185 to 238 (VRNK…FTEI). The segment covering 9-32 (NGNSSAASGSNDVVDVVAQQAAAA) has biased composition (low complexity). The segment covering 33 to 47 (VGGGGGGGGGGGGGN) has biased composition (gly residues). Positions 48 to 70 (PQQQQQNPQSTTAGGPTGATNNA) are enriched in low complexity. In terms of domain architecture, KID spans 198–257 (KPEPNTQHPEDSDESLSDDDSQHHRSELTRRPSYNKIFTEISGPDMSGASLPMSDGVLNS). Residues S209, S212, and S214 each carry the phosphoserine modification. Over residues 217–227 (DSQHHRSELTR) the composition is skewed to basic and acidic residues. The bZIP domain maps to 300–359 (TRKREIRLQKNREAARECRRKKKEYIKCLENRVAVLENQNKALIEELKSLKELYCQTKND). The tract at residues 301–326 (RKREIRLQKNREAARECRRKKKEYIK) is basic motif. The leucine-zipper stretch occupies residues 328-349 (LENRVAVLENQNKALIEELKSL).

It belongs to the bZIP family. ATF subfamily. As to quaternary structure, homodimer. In terms of tissue distribution, most cells of the adult brain; cell bodies, but not neuropil.

It localises to the nucleus. In terms of biological role, isoform E is a PKA-dependent transcriptional activator. Isoform J is a direct antagonist of activation by isoform E in cell culture. Binds the cAMP response element (CRE) (consensus: 5'-GTGACGT[AC][AG]-3'), a sequence present in many viral and cellular promoters. Has a role in long-term memory. In Drosophila melanogaster (Fruit fly), this protein is Cyclic AMP response element-binding protein B.